We begin with the raw amino-acid sequence, 551 residues long: Vacuolar protein sorting-associated protein 17 (551 aa).

Residues 1 to 100 (MTSAVPYDPY…SERVILPERS (100 aa)) form a disordered region. Composition is skewed to polar residues over residues 29–39 (AATTTDGSSSM) and 46–64 (TEQT…NIQN). Residues 108–227 (LLAKVTGLER…FFIESDFNTY (120 aa)) form the PX domain. Residues 359 to 385 (IMRNLVQAQQNSKAKQEQARRFRSRRD) adopt a coiled-coil conformation. The disordered stretch occupies residues 474–504 (RLGRHAVSNNNSDTSQTLKGDSWTGESNRKS). Over residues 480–504 (VSNNNSDTSQTLKGDSWTGESNRKS) the composition is skewed to polar residues. At Ser544 the chain carries Phosphoserine.

Belongs to the VPS17 family. As to quaternary structure, component of the retromer complex which consists of VPS29, VPS26, VPS35, VPS5 and VPS17. Component of a retromer subcomplex consisting of VPS5 and VPS17. Post-translationally, phosphorylated on one or more serine residues.

Its subcellular location is the endomembrane system. Its function is as follows. Component of the membrane-associated retromer complex which is essential in endosome-to-Golgi retrograde transport. The VPS5-VPS17 subcomplex may assemble onto the membrane to promote vesicle formation and is required for recycling the vacuolar protein-sorting receptor. Required for the sorting and delivery of a subset of soluble vacuolar hydrolases. Required for retention of late Golgi membrane proteins and vacuolar biogenesis. Involved in vacuolar fragmentation during hyperosmotic stress. This Saccharomyces cerevisiae (strain ATCC 204508 / S288c) (Baker's yeast) protein is Vacuolar protein sorting-associated protein 17.